The primary structure comprises 325 residues: Psp operon transcriptional activator (325 aa).

A Sigma-54 factor interaction domain is found at 15–237; the sequence is FLEVLEQVSH…ELKNVVERSV (223 aa). ATP is bound by residues 36-43 and 99-108; these read GERGTGKE and ADGGTLFLDE. The segment at residues 302 to 321 is a DNA-binding region (H-T-H motif); it reads QKRAAELLGLTYHQFRALLK.

Forms a complex with PspA, which is composed of around 6 PspF subunits and 6 PspA subunits.

The protein localises to the cytoplasm. Its activity is regulated as follows. ATPase activity is inhibited by interaction with PspA. Under inducing conditions, the interaction is disrupted, allowing activation of psp transcription. Functionally, transcriptional activator for the phage shock protein (psp) operon (pspABCDE) and pspG gene. The protein is Psp operon transcriptional activator (pspF) of Escherichia coli (strain K12).